A 925-amino-acid chain; its full sequence is Colossin-D (925 aa).

The N-terminal stretch at 1 to 26 (MIKVFKDLKFLILITIILLNLKSINC) is a signal peptide. 11 N-linked (GlcNAc...) asparagine glycosylation sites follow: asparagine 47, asparagine 95, asparagine 142, asparagine 166, asparagine 283, asparagine 334, asparagine 344, asparagine 378, asparagine 401, asparagine 511, and asparagine 642.

This sequence belongs to the serine-aspartate repeat-containing protein (SDr) family.

It localises to the secreted. The sequence is that of Colossin-D (colD) from Dictyostelium discoideum (Social amoeba).